A 109-amino-acid chain; its full sequence is Protein reprimo (109 aa).

N-linked (GlcNAc...) asparagine glycans are attached at residues N7 and N18. The chain crosses the membrane as a helical span at residues 56-76 (VVQIAVMCVLSLTVVFGIFFL). S98 bears the Phosphoserine mark.

Belongs to the reprimo family.

It localises to the cytoplasm. Its subcellular location is the membrane. In terms of biological role, may be involved in the regulation of p53-dependent G2 arrest of the cell cycle. Seems to induce cell cycle arrest by inhibiting CDK1 activity and nuclear translocation of the CDC2 cyclin B1 complex. This Homo sapiens (Human) protein is Protein reprimo (RPRM).